We begin with the raw amino-acid sequence, 513 residues long: ATP synthase subunit alpha (513 aa).

169 to 176 (GDRQIGKT) provides a ligand contact to ATP.

This sequence belongs to the ATPase alpha/beta chains family. F-type ATPases have 2 components, CF(1) - the catalytic core - and CF(0) - the membrane proton channel. CF(1) has five subunits: alpha(3), beta(3), gamma(1), delta(1), epsilon(1). CF(0) has three main subunits: a(1), b(2) and c(9-12). The alpha and beta chains form an alternating ring which encloses part of the gamma chain. CF(1) is attached to CF(0) by a central stalk formed by the gamma and epsilon chains, while a peripheral stalk is formed by the delta and b chains.

It is found in the cell inner membrane. It catalyses the reaction ATP + H2O + 4 H(+)(in) = ADP + phosphate + 5 H(+)(out). Functionally, produces ATP from ADP in the presence of a proton gradient across the membrane. The alpha chain is a regulatory subunit. The protein is ATP synthase subunit alpha of Shewanella sediminis (strain HAW-EB3).